Here is a 932-residue protein sequence, read N- to C-terminus: Probable serine/threonine-protein kinase clkA (932 aa).

Basic residues predominate over residues 1–10 (MDRFQTKRKT). 3 disordered regions span residues 1–21 (MDRFQTKRKTYSYNGYSNNDY), 39–198 (YKNN…YGDT), and 212–562 (NDYD…TNTN). 2 stretches are compositionally biased toward low complexity: residues 11–21 (YSYNGYSNNDY) and 39–123 (YKNN…ENNY). Residues 124 to 143 (FQSENQSNKDQNSYFNSSYL) show a composition bias toward polar residues. Composition is skewed to low complexity over residues 148–196 (DNYN…NSYG), 218–305 (NNNN…NGGN), 314–342 (VFNNNNNNNNNNNNNYNNYNSNNNYNNDY), and 351–562 (NIYS…TNTN). Positions 590 to 920 (YKVLCTVGSG…ASDALSHPFL (331 aa)) constitute a Protein kinase domain. Residues 596–604 (VGSGTFSTV) and K619 each bind ATP. Residue D719 is the Proton acceptor of the active site.

The protein belongs to the protein kinase superfamily. CMGC Ser/Thr protein kinase family.

The enzyme catalyses L-seryl-[protein] + ATP = O-phospho-L-seryl-[protein] + ADP + H(+). It carries out the reaction L-threonyl-[protein] + ATP = O-phospho-L-threonyl-[protein] + ADP + H(+). This is Probable serine/threonine-protein kinase clkA (clkA) from Dictyostelium discoideum (Social amoeba).